Reading from the N-terminus, the 499-residue chain is Phenylalanine--tRNA ligase alpha subunit (499 aa).

L-phenylalanine is bound by residues Thr-342, 381 to 383 (QID), and Phe-422. Position 424 (Glu-424) interacts with Mg(2+). Residue Phe-447 participates in L-phenylalanine binding.

This sequence belongs to the class-II aminoacyl-tRNA synthetase family. Phe-tRNA synthetase alpha subunit type 2 subfamily. As to quaternary structure, tetramer of two alpha and two beta subunits. Mg(2+) serves as cofactor.

The protein resides in the cytoplasm. The enzyme catalyses tRNA(Phe) + L-phenylalanine + ATP = L-phenylalanyl-tRNA(Phe) + AMP + diphosphate + H(+). The polypeptide is Phenylalanine--tRNA ligase alpha subunit (Thermococcus gammatolerans (strain DSM 15229 / JCM 11827 / EJ3)).